A 110-amino-acid chain; its full sequence is BolA-like protein 3 (110 aa).

The protein belongs to the BolA/IbaG family. In terms of assembly, interacts with NFU1.

It localises to the mitochondrion. In terms of biological role, acts as a mitochondrial iron-sulfur (Fe-S) cluster assembly factor that facilitates (Fe-S) cluster insertion into a subset of mitochondrial proteins. Probably acts together with NFU1. The chain is BolA-like protein 3 (BOLA3) from Bos taurus (Bovine).